The primary structure comprises 196 residues: Aequorin-2 (196 aa).

The propeptide occupies 1–7 (MTSKQYS). 4 EF-hand domains span residues 18-53 (RWIG…IVIN), 54-108 (NLGA…AKNE), 117-146 (DALF…AGII), and 147-182 (QSSE…FWYT). The Ca(2+) site is built by Asp-31, Asn-33, Asn-35, Lys-37, and Glu-42. 3 may interact with the chromophore regions span residues 47 to 57 (ASDIVINNLGA), 62 to 72 (AKRHKDAVEAF), and 107 to 117 (NEPTLIRIWGD). Residues Asp-124, Asp-126, Asn-128, Glu-135, Asp-160, Asp-162, Ser-164, Gln-166, and Glu-171 each contribute to the Ca(2+) site.

This sequence belongs to the aequorin family. In terms of processing, the reduction of the disulfide bond is necessary to regenerate aequorin from apoaequorin.

Ca(2+)-dependent bioluminescence photoprotein. Displays an emission peak at 470 nm (blue light). Trace amounts of calcium ion trigger the intramolecular oxidation of the chromophore, coelenterazine into coelenteramide and CO(2) with the concomitant emission of light. This is Aequorin-2 from Aequorea victoria (Water jellyfish).